The sequence spans 576 residues: MLDNFNQPKGSTIGVLKDGRTIQEAFDSLPRLESFSGSTATDKLRAAITLGVSEVAIGPVEGNGGRPYEFGDVVIPYPLRIVGCGSQGINVTKGTVLKRSAGASFMFHFTGEGQAQRPMGGGLFNINLNGDTATALGDIIKVTQWSYFKANNCAFQNMAGWGIRLKDVMESNISGNLFRRLGGPSGGGILFDDVRSAVTDNVNNLHIEDNTFALMSGPWIGSTANSNPDLIWIVRNKFEFDGTPAAPNTVDSYVLDFQQLSRAFIQDNGFTHFTTERNRYVGVLRVGATAVGTIKFEDNLLFACESAGLIAGGIVVSRGNVNNQGSATTAIKQFTNTSSKLCKLERVINVQSNGNVSVGQQILPDGYINMAELPGNTRLPSEYDADGETTSVLRVPANTQVRQWSVPKMYKDGLTVTKVTVRAKGAAAGAILSLQSGSTVLSTKSIDAGVWKNYVFYVKANQLQETLQLRNTGTADVLADGMVFGKVDYIDWDFAIAPGTLAAGAKYTTPNQSYLDVAGMRVQAVSIPMFDGPTTGLQVWVEATSANGSFVVVMKNDTGSELVTTVTRCRVRAFVS.

The interval 34–360 (SFSGSTATDK…QSNGNVSVGQ (327 aa)) is catalytic. Active-site residues include Glu170, Asp229, Glu239, and Asp241. The segment at 380 to 487 (PSEYDADGET…LADGMVFGKV (108 aa)) is carbohydrate binding. The segment at 488-576 (DYIDWDFAIA…TRCRVRAFVS (89 aa)) is lectin-like.

The protein in the N-terminal section; belongs to the Przondovirus depolymerase 2 family. This sequence in the C-terminal section; belongs to the K21-specific depolymerase family. In terms of assembly, homotrimer. The 3 parallel chains are tightly packed together to form an elongated structure of approximately 7 x 12 nm. Interacts (via N-terminus) with depolymerase 1 (via N-terminus); this interaction probably gives rise to a branched tailspike.

The protein localises to the virion. Functionally, functions as a receptor binding protein (RBP) and probably mediates the attachment to the host capsular exopolysaccharides. Displays a depolymerase activity that specifically degrades the K21-type polysaccharides Klebsiella pneumoniae capsule, which allows the phage to reach the host cell membrane and bind the entry receptor. In Klebsiella phage KP32 (Bacteriophage KP32), this protein is Depolymerase 2, capsule K21-specific.